Here is a 593-residue protein sequence, read N- to C-terminus: Glutamate decarboxylase 1 (593 aa).

Residues 1–12 (MASSTPSPATSS) show a composition bias toward low complexity. The interval 1–22 (MASSTPSPATSSNAGADPNTTN) is disordered. Residue Ser77 is modified to Phosphoserine. 189 to 191 (QLS) contributes to the 4-aminobutanoate binding site. Lys404 is modified (N6-(pyridoxal phosphate)lysine). Arg566 serves as a coordination point for 4-aminobutanoate.

It belongs to the group II decarboxylase family. Homodimer. Pyridoxal 5'-phosphate serves as cofactor. Expressed in brain and pancreatic islets.

The catalysed reaction is L-glutamate + H(+) = 4-aminobutanoate + CO2. In terms of biological role, catalyzes the synthesis of the inhibitory neurotransmitter gamma-aminobutyric acid (GABA) with pyridoxal 5'-phosphate as cofactor. This chain is Glutamate decarboxylase 1 (Gad1), found in Rattus norvegicus (Rat).